A 149-amino-acid polypeptide reads, in one-letter code: Large ribosomal subunit protein bL9 (149 aa).

It belongs to the bacterial ribosomal protein bL9 family.

Its function is as follows. Binds to the 23S rRNA. The chain is Large ribosomal subunit protein bL9 from Rubrobacter xylanophilus (strain DSM 9941 / JCM 11954 / NBRC 16129 / PRD-1).